The following is a 455-amino-acid chain: Putative FBD-associated F-box protein At5g56400 (455 aa).

Residues Val32 to Arg81 form the F-box domain. Positions Trp372–Ser421 constitute an FBD domain.

In Arabidopsis thaliana (Mouse-ear cress), this protein is Putative FBD-associated F-box protein At5g56400.